A 211-amino-acid chain; its full sequence is SOSS complex subunit B2 (211 aa).

The OB DNA-binding region spans 27-97 (IVLEIGRVTK…TLYTGRGGDL (71 aa)). Positions 125-211 (NQQNKTSKEQ…GRDPRRASKR (87 aa)) are disordered. Over residues 136–157 (GNSPPNQNAGNGTVPVFSNNNA) the composition is skewed to polar residues. Residues 179–195 (NGPPPVTAGGTPAPPKP) are compositionally biased toward pro residues.

This sequence belongs to the SOSS-B family. SOSS-B2 subfamily. Component of the SOSS complex, composed of soss-b (soss-b1/nabp2 or soss-b2/nabp1), soss-a/ints3 and soss-c/inip. SOSS complexes containing soss-b1/nabp2 are more abundant than complexes containing soss-b2/nabp1.

It is found in the nucleus. Component of the SOSS complex, a multiprotein complex that functions downstream of the MRN complex to promote DNA repair and G2/M checkpoint. In the SOSS complex, acts as a sensor of single-stranded DNA that binds to single-stranded DNA. The SOSS complex associates with DNA lesions and influences diverse endpoints in the cellular DNA damage response including cell-cycle checkpoint activation, recombinational repair and maintenance of genomic stability. Required for efficient homologous recombination-dependent repair of double-strand breaks (DSBs). In Danio rerio (Zebrafish), this protein is SOSS complex subunit B2 (nabp1).